The primary structure comprises 390 residues: Spore development regulator vosA (390 aa).

The Velvet domain maps to 3 to 132; that stretch reads NNTSSDFDLI…ADQGVKLRIR (130 aa). Basic and acidic residues predominate over residues 137-149; it reads TMLKRSTRPDEFH. 2 disordered regions span residues 137–191 and 265–390; these read TMLK…PVKR and QASA…GTPQ. The span at 165-175 shows a compositional bias: low complexity; sequence PPSSSYGGYPP. The short motif at 273-280 is the Nuclear localization signal element; the sequence is IPDPTGQS. 2 stretches are compositionally biased toward polar residues: residues 350–364 and 371–390; these read QTPQ…SQMV and SSVT…GTPQ.

Belongs to the velvet family. VosA subfamily. As to quaternary structure, forms a heterodimeric complex with velB; the formation of the velB-vosA complex is light-dependent. Interacts with velA, velB and velC.

The protein localises to the nucleus. Its function is as follows. Component of the velB-VosA heterodimeric complex that plays a dual role in activating genes associated with spore maturation and repressing certain development-associated genes. The complex binds DNA through the DNA-binding domain of vosA that recognizes an 11-nucleotide consensus sequence 5'-CTGGCCGCGGC-3' consisting of two motifs in the promoters of key developmental regulatory genes. The chain is Spore development regulator vosA from Penicillium rubens (strain ATCC 28089 / DSM 1075 / NRRL 1951 / Wisconsin 54-1255) (Penicillium chrysogenum).